The sequence spans 249 residues: Sugar fermentation stimulation protein homolog (249 aa).

This sequence belongs to the SfsA family.

The sequence is that of Sugar fermentation stimulation protein homolog from Synechococcus sp. (strain CC9902).